The following is a 367-amino-acid chain: tRNA pseudouridine synthase D (367 aa).

Aspartate 80 functions as the Nucleophile in the catalytic mechanism. A TRUD domain is found at 156–316 (GIPNWFGEQR…LKQERRALRL (161 aa)).

It belongs to the pseudouridine synthase TruD family.

The catalysed reaction is uridine(13) in tRNA = pseudouridine(13) in tRNA. In terms of biological role, responsible for synthesis of pseudouridine from uracil-13 in transfer RNAs. This Xanthomonas campestris pv. campestris (strain 8004) protein is tRNA pseudouridine synthase D.